The primary structure comprises 733 residues: Nuclear hormone receptor family member nhr-66 (733 aa).

2 stretches are compositionally biased toward low complexity: residues Pro113–Ser130 and Gln165–Asn185. The disordered stretch occupies residues Pro113–Lys190. A DNA-binding region (nuclear receptor) is located at residues Val266–His343. NR C4-type zinc fingers lie at residues Cys269–Cys289 and Cys305–Cys326. The tract at residues Pro361 to Gly396 is disordered. Positions Val371–Gly382 are enriched in low complexity. The NR LBD domain occupies Cys444 to Glu687. An AF-2 region spans residues Ala676–Glu687. The segment at Val691 to Leu733 is disordered.

It belongs to the nuclear hormone receptor family. In terms of assembly, interacts with nuclear hormone receptor nhr-49; the interaction is direct. Widely expressed, including in hypodermis, gut, muscle, and neuronal cells of the ventral nerve cord, head, and tail ganglia. Expressed in the head ganglion in several sensory and interneurons, including AVA.

The protein localises to the nucleus. In terms of biological role, transcription factor. Binds to regulatory elements and regulates transcription of target genes, including the potassium channel accessory subunit mps-2. Negatively regulates transcription of mps-2, thereby modulating age-dependent memory decline. In concert with nuclear hormone receptor nhr-49, involved in regulating target genes with roles in sphingolipid breakdown and lipid remodeling. Plays a role in modulating mitochondrial morphology and function. The protein is Nuclear hormone receptor family member nhr-66 of Caenorhabditis elegans.